The chain runs to 454 residues: Tegument protein VP16 homolog (454 aa).

This sequence belongs to the herpesviridae tegument protein VP16 protein family. In terms of assembly, associates with the VP16-induced complex; binding to host HCFC1 activates VP16 for association with the octamer motif-binding host protein POU2F1, to form a multiprotein-DNA complex responsible for activating transcription of the viral immediate early genes.

The protein localises to the virion tegument. The protein resides in the host nucleus. Transcriptional activator of immediate-early (IE) gene products (alpha genes). Acts as a key activator of lytic infection by initiating the lytic program through the assembly of the transcriptional regulatory VP16-induced complex composed of VP16 and two cellular factors, HCFC1 and POU2F1. VP16-induced complex represents a regulatory switch: when it is on, it promotes IE-gene expression and thus lytic infection, and when it is off, it limits IE-gene transcription favoring latent infection. Its function is as follows. May play a role in the aggregation of tegument proteins around nucleocapsids during virus morphogenesis. The polypeptide is Tegument protein VP16 homolog (12) (Equine herpesvirus 4 (strain 1942) (EHV-4)).